The sequence spans 143 residues: Flagellar assembly factor FliW (143 aa).

The protein belongs to the FliW family. In terms of assembly, interacts with translational regulator CsrA and flagellin(s).

It is found in the cytoplasm. Functionally, acts as an anti-CsrA protein, binds CsrA and prevents it from repressing translation of its target genes, one of which is flagellin. Binds to flagellin and participates in the assembly of the flagellum. The chain is Flagellar assembly factor FliW from Clostridium novyi (strain NT).